Here is a 199-residue protein sequence, read N- to C-terminus: ATP-dependent Clp protease proteolytic subunit (199 aa).

Residue S102 is the Nucleophile of the active site. The active site involves H127.

The protein belongs to the peptidase S14 family. Component of the chloroplastic Clp protease core complex.

It localises to the plastid. Its subcellular location is the chloroplast stroma. The enzyme catalyses Hydrolysis of proteins to small peptides in the presence of ATP and magnesium. alpha-casein is the usual test substrate. In the absence of ATP, only oligopeptides shorter than five residues are hydrolyzed (such as succinyl-Leu-Tyr-|-NHMec, and Leu-Tyr-Leu-|-Tyr-Trp, in which cleavage of the -Tyr-|-Leu- and -Tyr-|-Trp bonds also occurs).. Cleaves peptides in various proteins in a process that requires ATP hydrolysis. Has a chymotrypsin-like activity. Plays a major role in the degradation of misfolded proteins. This Physcomitrium patens (Spreading-leaved earth moss) protein is ATP-dependent Clp protease proteolytic subunit.